Here is a 366-residue protein sequence, read N- to C-terminus: Ribosomal RNA large subunit methyltransferase M (366 aa).

Residues Ser-188, 221 to 224, Asp-240, Asp-260, and Asp-277 contribute to the S-adenosyl-L-methionine site; that span reads CPGG. Residue Lys-306 is the Proton acceptor of the active site.

It belongs to the class I-like SAM-binding methyltransferase superfamily. RNA methyltransferase RlmE family. RlmM subfamily. In terms of assembly, monomer.

The protein resides in the cytoplasm. It catalyses the reaction cytidine(2498) in 23S rRNA + S-adenosyl-L-methionine = 2'-O-methylcytidine(2498) in 23S rRNA + S-adenosyl-L-homocysteine + H(+). Catalyzes the 2'-O-methylation at nucleotide C2498 in 23S rRNA. This Salmonella agona (strain SL483) protein is Ribosomal RNA large subunit methyltransferase M.